Reading from the N-terminus, the 1167-residue chain is DNA-directed RNA polymerase subunit beta (1167 aa).

This sequence belongs to the RNA polymerase beta chain family. The RNAP catalytic core consists of 2 alpha, 1 beta, 1 beta' and 1 omega subunit. When a sigma factor is associated with the core the holoenzyme is formed, which can initiate transcription.

It catalyses the reaction RNA(n) + a ribonucleoside 5'-triphosphate = RNA(n+1) + diphosphate. Its function is as follows. DNA-dependent RNA polymerase catalyzes the transcription of DNA into RNA using the four ribonucleoside triphosphates as substrates. The polypeptide is DNA-directed RNA polymerase subunit beta (Treponema denticola (strain ATCC 35405 / DSM 14222 / CIP 103919 / JCM 8153 / KCTC 15104)).